The chain runs to 177 residues: Translation initiation factor IF-3 (177 aa).

Belongs to the IF-3 family. As to quaternary structure, monomer.

The protein localises to the cytoplasm. Functionally, IF-3 binds to the 30S ribosomal subunit and shifts the equilibrium between 70S ribosomes and their 50S and 30S subunits in favor of the free subunits, thus enhancing the availability of 30S subunits on which protein synthesis initiation begins. The protein is Translation initiation factor IF-3 of Clostridium perfringens (strain 13 / Type A).